Reading from the N-terminus, the 59-residue chain is Arabinogalactan protein 13 (59 aa).

The first 27 residues, 1–27 (MEAMKMRLFVAVLVAAMAFSAVQQAAA), serve as a signal peptide directing secretion. Pro31, Pro33, and Pro35 each carry 4-hydroxyproline. Pro31, Pro33, and Pro35 each carry an O-linked (Ara...) hydroxyproline glycan. Ser37 is lipidated: GPI-anchor amidated serine. A propeptide spans 38–59 (DASLAIPAFFASVATLAFGFLF) (removed in mature form).

Belongs to the AG-peptide AGP family. Post-translationally, contains 4-hydroxyproline; hydroxylated on Pro-31, Pro-33 and Pro-35. In terms of processing, O-glycosylated on hydroxyprolines; noncontiguous hydroxylproline residues are glycosylated with arabinogalactan.

The protein localises to the cell membrane. Functionally, proteoglycan that seems to be implicated in diverse developmental roles such as differentiation, cell-cell recognition, embryogenesis and programmed cell death. This is Arabinogalactan protein 13 from Arabidopsis thaliana (Mouse-ear cress).